Consider the following 193-residue polypeptide: Homeobox protein HD-12 (193 aa).

A DNA-binding region (homeobox; TALE-type) is located at residues 123–185; the sequence is SVIRRINFPK…NARRRILPFM (63 aa).

It belongs to the TALE/KNOX homeobox family.

Its subcellular location is the nucleus. In Encephalitozoon cuniculi (strain GB-M1) (Microsporidian parasite), this protein is Homeobox protein HD-12 (HD-12).